The chain runs to 310 residues: Ribosomal RNA small subunit methyltransferase H (310 aa).

Residues 33–35, Asp-53, Phe-79, Asp-100, and Gln-107 contribute to the S-adenosyl-L-methionine site; that span reads AGH.

Belongs to the methyltransferase superfamily. RsmH family.

The protein resides in the cytoplasm. The enzyme catalyses cytidine(1402) in 16S rRNA + S-adenosyl-L-methionine = N(4)-methylcytidine(1402) in 16S rRNA + S-adenosyl-L-homocysteine + H(+). Specifically methylates the N4 position of cytidine in position 1402 (C1402) of 16S rRNA. This Clostridium botulinum (strain Eklund 17B / Type B) protein is Ribosomal RNA small subunit methyltransferase H.